Reading from the N-terminus, the 235-residue chain is Large ribosomal subunit protein uL4 (235 aa).

The tract at residues 45 to 75 is disordered; the sequence is RAGTASTKTRGEVSGGGRKPWPQKHTGRARH. Over residues 65 to 75 the composition is skewed to basic residues; sequence WPQKHTGRARH.

This sequence belongs to the universal ribosomal protein uL4 family. Part of the 50S ribosomal subunit.

In terms of biological role, one of the primary rRNA binding proteins, this protein initially binds near the 5'-end of the 23S rRNA. It is important during the early stages of 50S assembly. It makes multiple contacts with different domains of the 23S rRNA in the assembled 50S subunit and ribosome. This protein only weakly controls expression of the E.coli S10 operon. It is incorporated into E.coli ribosomes, however it is not as firmly associated as the endogenous protein. Its function is as follows. Forms part of the polypeptide exit tunnel. The sequence is that of Large ribosomal subunit protein uL4 (rplD) from Thermotoga maritima (strain ATCC 43589 / DSM 3109 / JCM 10099 / NBRC 100826 / MSB8).